A 334-amino-acid chain; its full sequence is Nucleoid-associated protein SG1574 (334 aa).

The protein belongs to the YejK family.

Its subcellular location is the cytoplasm. The protein localises to the nucleoid. The polypeptide is Nucleoid-associated protein SG1574 (Sodalis glossinidius (strain morsitans)).